The sequence spans 358 residues: Ion-translocating oxidoreductase complex subunit D (358 aa).

Transmembrane regions (helical) follow at residues 19–39 (IMLW…YYFG), 41–61 (GVVL…FIAI), 79–99 (LTAL…VIII), and 125–145 (IGYV…MPPI). Thr186 carries the FMN phosphoryl threonine modification. The next 5 helical transmembrane spans lie at 220–240 (FAQG…FLIL), 248–268 (IPVA…FTGF), 271–291 (LSAI…FIAT), 297–317 (SITP…VYLI), and 321–341 (GNYP…VPLI).

This sequence belongs to the NqrB/RnfD family. The complex is composed of six subunits: RnfA, RnfB, RnfC, RnfD, RnfE and RnfG. FMN serves as cofactor.

The protein resides in the cell inner membrane. Its function is as follows. Part of a membrane-bound complex that couples electron transfer with translocation of ions across the membrane. This chain is Ion-translocating oxidoreductase complex subunit D, found in Haemophilus influenzae (strain PittGG).